The chain runs to 78 residues: Large ribosomal subunit protein bL28 (78 aa).

The interval 1 to 22 (MAKVCQVTGKRPVTGHNVSHAK) is disordered.

The protein belongs to the bacterial ribosomal protein bL28 family.

This Saccharophagus degradans (strain 2-40 / ATCC 43961 / DSM 17024) protein is Large ribosomal subunit protein bL28.